Here is a 582-residue protein sequence, read N- to C-terminus: MAPRIRVLAALDQARTQYYHFKAIVIAGMGLFTDSYDLFCISPVMKIFGRVYYAPSGSVDGSGSGPGVTPPAVVSATVGVALLGAVAGNVVFGALGDRVGRRRVYGACLLLMVCSSVGSGLSVCRTRRCALASLCFFRFLLGVGVGGDYPLSATIMSEFANRRTRGAFIAAVFSMQGFGILVSSAVTMAVAAAFDHYTGYPAPLDTPECADLAWRIILMAGAVPAALTYYWRMSMPETARYTALVERDVVKATNDIGRVLADLDLAAVAEEEVAAAALSPPPVTTPPPPRPSYGLFSRRFVRQHGRDLFACAAAWFLLDIPYYSSTLFQSQIYRPWFPPAAKVNAFQEAFNVAKFQAVIAVASTIPGYFAAMLLIERAGRRRLQMAGFLLMAVFLFALAGPYDGYWRDHAKTAGYIVLYSLTFFSANLGPNTTTFILPAELFPARFRSTCHGLSGAAGKLGALVGSIGFLWASQQKDGAAAGHLPGIGMMYALFVLGGICLLGLALTYAFTPETMTRSLEENESSVQAQSQVGDGGSDAGNGSDGLRFHELNVLMEAATKSPVSMASSHLSMSPILPHRMSL.

Residues 1–23 lie on the Cytoplasmic side of the membrane; sequence MAPRIRVLAALDQARTQYYHFKA. A helical transmembrane segment spans residues 24 to 44; sequence IVIAGMGLFTDSYDLFCISPV. Residues 45-75 lie on the Extracellular side of the membrane; sequence MKIFGRVYYAPSGSVDGSGSGPGVTPPAVVS. The chain crosses the membrane as a helical span at residues 76 to 96; it reads ATVGVALLGAVAGNVVFGALG. Over 97 to 103 the chain is Cytoplasmic; it reads DRVGRRR. Residues 104-124 traverse the membrane as a helical segment; sequence VYGACLLLMVCSSVGSGLSVC. The Extracellular segment spans residues 125–130; it reads RTRRCA. A helical transmembrane segment spans residues 131–151; that stretch reads LASLCFFRFLLGVGVGGDYPL. Topologically, residues 152–165 are cytoplasmic; sequence SATIMSEFANRRTR. A helical transmembrane segment spans residues 166–186; that stretch reads GAFIAAVFSMQGFGILVSSAV. At 187-210 the chain is on the extracellular side; that stretch reads TMAVAAAFDHYTGYPAPLDTPECA. The chain crosses the membrane as a helical span at residues 211–231; it reads DLAWRIILMAGAVPAALTYYW. The Cytoplasmic portion of the chain corresponds to 232 to 307; it reads RMSMPETARY…RRFVRQHGRD (76 aa). Residues 308 to 328 form a helical membrane-spanning segment; the sequence is LFACAAAWFLLDIPYYSSTLF. Residues 329 to 354 are Extracellular-facing; that stretch reads QSQIYRPWFPPAAKVNAFQEAFNVAK. A helical membrane pass occupies residues 355 to 375; it reads FQAVIAVASTIPGYFAAMLLI. Residues 376-385 lie on the Cytoplasmic side of the membrane; it reads ERAGRRRLQM. A helical transmembrane segment spans residues 386 to 406; the sequence is AGFLLMAVFLFALAGPYDGYW. Over 407 to 415 the chain is Extracellular; the sequence is RDHAKTAGY. The chain crosses the membrane as a helical span at residues 416-436; sequence IVLYSLTFFSANLGPNTTTFI. The Cytoplasmic portion of the chain corresponds to 437–451; it reads LPAELFPARFRSTCH. Residues 452–472 form a helical membrane-spanning segment; the sequence is GLSGAAGKLGALVGSIGFLWA. The Extracellular portion of the chain corresponds to 473–485; the sequence is SQQKDGAAAGHLP. Residues 486 to 506 form a helical membrane-spanning segment; the sequence is GIGMMYALFVLGGICLLGLAL. Residues 507-582 are Cytoplasmic-facing; the sequence is TYAFTPETMT…SPILPHRMSL (76 aa). Residues 519-541 form a disordered region; that stretch reads LEENESSVQAQSQVGDGGSDAGN.

This sequence belongs to the major facilitator superfamily. Phosphate:H(+) symporter (TC 2.A.1.9) family. In terms of tissue distribution, expressed at low levels in roots.

Its subcellular location is the membrane. Functionally, high-affinity transporter for external inorganic phosphate. The chain is Probable inorganic phosphate transporter 1-9 (PHT1-9) from Oryza sativa subsp. japonica (Rice).